The chain runs to 201 residues: tRNA (guanine-N(7)-)-methyltransferase (201 aa).

S-adenosyl-L-methionine-binding residues include glutamate 33, glutamate 58, aspartate 85, and aspartate 108. Aspartate 108 is an active-site residue. Lysine 112 and aspartate 144 together coordinate substrate.

The protein belongs to the class I-like SAM-binding methyltransferase superfamily. TrmB family.

The enzyme catalyses guanosine(46) in tRNA + S-adenosyl-L-methionine = N(7)-methylguanosine(46) in tRNA + S-adenosyl-L-homocysteine. It participates in tRNA modification; N(7)-methylguanine-tRNA biosynthesis. Catalyzes the formation of N(7)-methylguanine at position 46 (m7G46) in tRNA. This chain is tRNA (guanine-N(7)-)-methyltransferase, found in Anaeromyxobacter dehalogenans (strain 2CP-C).